The following is a 483-amino-acid chain: Membrane-bound lytic murein transglycosylase F (483 aa).

Positions 1–18 (MKGLVIRISVALALLLWA) are cleaved as a signal peptide. The tract at residues 19-270 (VDMVFPWQQI…RIEEKYFSHI (252 aa)) is non-LT domain. Positions 272-483 (QFDYVDIKSY…IMITPQNSQD (212 aa)) are LT domain. Residue E315 is part of the active site.

It in the N-terminal section; belongs to the bacterial solute-binding protein 3 family. In the C-terminal section; belongs to the transglycosylase Slt family.

Its subcellular location is the cell outer membrane. The enzyme catalyses Exolytic cleavage of the (1-&gt;4)-beta-glycosidic linkage between N-acetylmuramic acid (MurNAc) and N-acetylglucosamine (GlcNAc) residues in peptidoglycan, from either the reducing or the non-reducing ends of the peptidoglycan chains, with concomitant formation of a 1,6-anhydrobond in the MurNAc residue.. Functionally, murein-degrading enzyme that degrades murein glycan strands and insoluble, high-molecular weight murein sacculi, with the concomitant formation of a 1,6-anhydromuramoyl product. Lytic transglycosylases (LTs) play an integral role in the metabolism of the peptidoglycan (PG) sacculus. Their lytic action creates space within the PG sacculus to allow for its expansion as well as for the insertion of various structures such as secretion systems and flagella. In Actinobacillus succinogenes (strain ATCC 55618 / DSM 22257 / CCUG 43843 / 130Z), this protein is Membrane-bound lytic murein transglycosylase F.